The chain runs to 338 residues: Protein FosB (338 aa).

Disordered regions lie at residues 1 to 54 and 80 to 179; these read MFQA…PGSF and AQSQ…RREL. Composition is skewed to polar residues over residues 13 to 31 and 102 to 112; these read SRCS…SVDS and TSYSTPGLSAY. The residue at position 27 (Ser27) is a Phosphoserine. The span at 123 to 137 shows a compositional bias: low complexity; that stretch reads PSTSTTTSGPVSARP. Residues 155–218 enclose the bZIP domain; the sequence is EEKRRVRRER…ERLEFVLVAH (64 aa). A basic motif region spans residues 157 to 182; sequence KRRVRRERNKLAAAKCRNRRRELTDR. Positions 183-211 are leucine-zipper; the sequence is LQAETDQLEEEKAELESEIAELQKEKERL. Disordered stretches follow at residues 222–276 and 316–338; these read CKIP…PPNL and GAQR…LLAL. Pro residues predominate over residues 256-265; the sequence is LPPPPPPPLP. Composition is skewed to polar residues over residues 266 to 276 and 318 to 338; these read FQSSRDAPPNL and QRTS…LLAL.

It belongs to the bZIP family. Fos subfamily. In terms of assembly, heterodimer; binds to DNA as heterodimer. Component of an AP-1 transcription factor complex; composed of FOS-JUN heterodimers. As part of the AP-1 transcription factor complex, forms heterodimers with JUN, JUNB or JUND, thereby binding to the AP-1 consensus sequence and stimulating transcription. Interacts with the BAF multiprotein chromatin-remodeling complex subunits SMARCB1 and SMARCD1. Interacts with ARID1A and JUN. As to quaternary structure, homodimer under oxidizing conditions and monomer under reducing conditions (in vitro). Heterodimer; binds to DNA as heterodimer. Forms heterodimers with JUNB, JUN or JUND; thereby binding to the AP-1 consensus sequence but does not stimulate transcription. Forms heterodimers with JUND under oxidizing conditions. In terms of processing, phosphorylated. Phosphorylated at Ser-27 by CSNK2A1; phosphorylation increases protein stability and transactivation potential. Expressed in brain, including the preoptic area of the hypothalamus, the main and accessory olfactory bulbs, the pyriform cortex and the hippocampus (at protein level). Expressed in the neurons of the subgranular zone of the dentate gyrus in the hippocampus (at protein level). Expressed in pyramidal cells in CA1 and CA3, in the dentate gyrus and the nucleus accumbens of the striatum (at protein level). As to expression, expressed in the core and shell of the nucleus accumbens of the striatum (at protein level). Expressed in the neurons of the subgranular zone of the dentate gyrus in the hippocampus (at protein level).

It localises to the nucleus. Functionally, heterodimerizes with proteins of the JUN family to form an AP-1 transcription factor complex, thereby enhancing their DNA binding activity to gene promoters containing an AP-1 consensus sequence 5'-TGA[GC]TCA-3' and enhancing their transcriptional activity. As part of the AP-1 complex, facilitates enhancer selection together with cell-type-specific transcription factors by collaboratively binding to nucleosomal enhancers and recruiting the SWI/SNF (BAF) chromatin remodeling complex to establish accessible chromatin. Together with JUN, plays a role in activation-induced cell death of T cells by binding to the AP-1 promoter site of FASLG/CD95L, and inducing its transcription in response to activation of the TCR/CD3 signaling pathway. Exhibits transactivation activity in vitro. Involved in the display of nurturing behavior towards newborns. May play a role in neurogenesis in the hippocampus and in learning and memory-related tasks by regulating the expression of various genes involved in neurogenesis, depression and epilepsy. Implicated in behavioral responses related to morphine reward and spatial memory. Its function is as follows. Exhibits lower transactivation activity than isoform 1 in vitro. The heterodimer with JUN does not display any transcriptional activity, and may thereby act as an transcriptional inhibitor. May be involved in the regulation of neurogenesis in the hippocampus. May play a role in synaptic modifications in nucleus accumbens medium spiny neurons and thereby play a role in adaptive and pathological reward-dependent learning, including maladaptive responses involved in drug addiction. Seems to be more stably expressed with a half-life of ~9.5 hours in cell culture as compared to 1.5 hours half-life of isoform 1. This Mus musculus (Mouse) protein is Protein FosB.